A 407-amino-acid polypeptide reads, in one-letter code: Phosphopentomutase (407 aa).

The Mn(2+) site is built by Asp10, Asp306, His311, Asp347, His348, and His359.

It belongs to the phosphopentomutase family. It depends on Mn(2+) as a cofactor.

It is found in the cytoplasm. The catalysed reaction is 2-deoxy-alpha-D-ribose 1-phosphate = 2-deoxy-D-ribose 5-phosphate. The enzyme catalyses alpha-D-ribose 1-phosphate = D-ribose 5-phosphate. It participates in carbohydrate degradation; 2-deoxy-D-ribose 1-phosphate degradation; D-glyceraldehyde 3-phosphate and acetaldehyde from 2-deoxy-alpha-D-ribose 1-phosphate: step 1/2. In terms of biological role, isomerase that catalyzes the conversion of deoxy-ribose 1-phosphate (dRib-1-P) and ribose 1-phosphate (Rib-1-P) to deoxy-ribose 5-phosphate (dRib-5-P) and ribose 5-phosphate (Rib-5-P), respectively. The sequence is that of Phosphopentomutase from Buchnera aphidicola subsp. Acyrthosiphon pisum (strain 5A).